Reading from the N-terminus, the 548-residue chain is MTRYIFVTGGVVSSLGKGIASASLAAILEARGLKVTILKLDPYINVDPGTMSPFQHGEVFVTEDGAETDLDLGHYERFIRTKMTQGNNFTTGRVYEHVLRKERRGDYLGGTVQVIPHITDEIKRRVYEGGDGFDVALVEIGGTVGDIESLPFLEATRQIRSEKGANQAIFMHLTLVPYIKTAGETKTKPTQHSVKELRSIGIQPDILICRSEVELEESERRKIALFTNVEERAVVPLQDADTIYRIPLMLHEHGLDDIICDKLRIEADEVDLAEWVRVLDAKLNPLKSVNIAMVGKYMELLDAYKSLNEALIHAGIQGRVKVNIDYIDSEDIEHHGTERLAGKDAILVPGGFGERGVEGKIATARYARENGVPYLGICLGMQVAVIEYARHVAGWADANSTEFTHDTQHPVVGLITEWVNAEGKIELRDAASDLGGTMRLGGQVCHLKPGTRAHEAYGLDEITERHRHRFEVNNQFVEALESAGLVISGKSADHSLVEMIELPEHPWYVACQFHPEFTSTPRDGHPLFSGFVNAALAYKAARARAQQS.

An amidoligase domain region spans residues 1–265 (MTRYIFVTGG…DDIICDKLRI (265 aa)). Position 13 (S13) interacts with CTP. A UTP-binding site is contributed by S13. Residues 14-19 (SLGKGI) and D71 each bind ATP. Mg(2+)-binding residues include D71 and E139. Residues 146–148 (DIE), 186–191 (KTKPTQ), and K222 contribute to the CTP site. UTP is bound by residues 186-191 (KTKPTQ) and K222. In terms of domain architecture, Glutamine amidotransferase type-1 spans 290–541 (NIAMVGKYME…VNAALAYKAA (252 aa)). An L-glutamine-binding site is contributed by G351. The Nucleophile; for glutamine hydrolysis role is filled by C378. L-glutamine-binding positions include 379–382 (LGMQ), E402, and R469. Residues H514 and E516 contribute to the active site.

The protein belongs to the CTP synthase family. As to quaternary structure, homotetramer.

The enzyme catalyses UTP + L-glutamine + ATP + H2O = CTP + L-glutamate + ADP + phosphate + 2 H(+). It carries out the reaction L-glutamine + H2O = L-glutamate + NH4(+). It catalyses the reaction UTP + NH4(+) + ATP = CTP + ADP + phosphate + 2 H(+). It functions in the pathway pyrimidine metabolism; CTP biosynthesis via de novo pathway; CTP from UDP: step 2/2. With respect to regulation, allosterically activated by GTP, when glutamine is the substrate; GTP has no effect on the reaction when ammonia is the substrate. The allosteric effector GTP functions by stabilizing the protein conformation that binds the tetrahedral intermediate(s) formed during glutamine hydrolysis. Inhibited by the product CTP, via allosteric rather than competitive inhibition. In terms of biological role, catalyzes the ATP-dependent amination of UTP to CTP with either L-glutamine or ammonia as the source of nitrogen. Regulates intracellular CTP levels through interactions with the four ribonucleotide triphosphates. In Chromohalobacter salexigens (strain ATCC BAA-138 / DSM 3043 / CIP 106854 / NCIMB 13768 / 1H11), this protein is CTP synthase.